Here is a 137-residue protein sequence, read N- to C-terminus: NADH-quinone oxidoreductase subunit A (137 aa).

The next 3 helical transmembrane spans lie at 12-32 (WAFAVFLLGVCGLIAFMLGVS), 68-88 (LVAMLFVIFDVEALFLFAWAV), and 94-114 (GWVGLVGATVFITILFAGLVY).

This sequence belongs to the complex I subunit 3 family. NDH-1 is composed of 13 different subunits. Subunits NuoA, H, J, K, L, M, N constitute the membrane sector of the complex.

It localises to the cell inner membrane. The catalysed reaction is a quinone + NADH + 5 H(+)(in) = a quinol + NAD(+) + 4 H(+)(out). Its function is as follows. NDH-1 shuttles electrons from NADH, via FMN and iron-sulfur (Fe-S) centers, to quinones in the respiratory chain. The immediate electron acceptor for the enzyme in this species is believed to be ubiquinone. Couples the redox reaction to proton translocation (for every two electrons transferred, four hydrogen ions are translocated across the cytoplasmic membrane), and thus conserves the redox energy in a proton gradient. The polypeptide is NADH-quinone oxidoreductase subunit A (Ectopseudomonas mendocina (strain ymp) (Pseudomonas mendocina)).